Reading from the N-terminus, the 256-residue chain is Ras-related protein Rab-26 (256 aa).

The tract at residues 1–53 is disordered; it reads MSRKKTPKSKAGSAPATSALPAANGPRPVRPGTARPGPEAPPNGPPQPGRSSV. The segment covering 38 to 48 has biased composition (pro residues); it reads PEAPPNGPPQP. Residues Ser72, Gly73, Val74, Gly75, Lys76, Thr77, Cys78, Ser95, and Thr96 each contribute to the GTP site. Thr77 contributes to the Mg(2+) binding site. Short sequence motifs (switch) lie at residues 86 to 101 and 119 to 136; these read GAFL…GIDF and DTAG…YYRD. 2 residues coordinate Mg(2+): Thr96 and Asp119. The GTP site is built by Gly122, Asn177, Lys178, Asp180, Ala208, and Lys209. 2 S-geranylgeranyl cysteine lipidation sites follow: Cys253 and Cys254.

The protein belongs to the small GTPase superfamily. Rab family. Mg(2+) serves as cofactor.

Its subcellular location is the cell membrane. It catalyses the reaction GTP + H2O = GDP + phosphate + H(+). Its activity is regulated as follows. Regulated by guanine nucleotide exchange factors (GEFs) which promote the exchange of bound GDP for free GTP. Regulated by GTPase activating proteins (GAPs) which increase the GTP hydrolysis activity. Inhibited by GDP dissociation inhibitors (GDIs). Functionally, the small GTPases Rab are key regulators of intracellular membrane trafficking, from the formation of transport vesicles to their fusion with membranes. Rabs cycle between an inactive GDP-bound form and an active GTP-bound form that is able to recruit to membranes different set of downstream effectors directly responsible for vesicle formation, movement, tethering and fusion. RAB26 mediates transport of ADRA2A and ADRA2B from the Golgi to the cell membrane. Plays a role in the maturation of zymogenic granules and in pepsinogen secretion in the stomach. Plays a role in the secretion of amylase from acinar granules in the parotid gland. The protein is Ras-related protein Rab-26 (RAB26) of Bos taurus (Bovine).